We begin with the raw amino-acid sequence, 307 residues long: tRNA pseudouridine synthase B (307 aa).

The active-site Nucleophile is the D48.

This sequence belongs to the pseudouridine synthase TruB family. Type 1 subfamily.

It carries out the reaction uridine(55) in tRNA = pseudouridine(55) in tRNA. Its function is as follows. Responsible for synthesis of pseudouridine from uracil-55 in the psi GC loop of transfer RNAs. In Pasteurella multocida (strain Pm70), this protein is tRNA pseudouridine synthase B.